The primary structure comprises 540 residues: Chaperonin GroEL (540 aa).

ATP-binding positions include 29–32 (TLGP), 86–90 (DGTTT), Gly-413, 476–478 (NAA), and Asp-492.

Belongs to the chaperonin (HSP60) family. In terms of assembly, forms a cylinder of 14 subunits composed of two heptameric rings stacked back-to-back. Interacts with the co-chaperonin GroES.

The protein localises to the cytoplasm. It carries out the reaction ATP + H2O + a folded polypeptide = ADP + phosphate + an unfolded polypeptide.. Functionally, together with its co-chaperonin GroES, plays an essential role in assisting protein folding. The GroEL-GroES system forms a nano-cage that allows encapsulation of the non-native substrate proteins and provides a physical environment optimized to promote and accelerate protein folding. This Streptococcus agalactiae protein is Chaperonin GroEL.